The following is a 324-amino-acid chain: Carbonic anhydrase 15 (324 aa).

An N-terminal signal peptide occupies residues 1-18 (MWALDFLLSFLLIQLAAQ). Positions 23–293 (GTWCYDSQDP…LGGRRISASP (271 aa)) constitute an Alpha-carbonic anhydrase domain. The active-site Proton acceptor is His-90. Zn(2+)-binding residues include His-122, His-124, and His-147. Tyr-155 is a catalytic residue. N-linked (GlcNAc...) asparagine glycosylation is found at Asn-184, Asn-194, and Asn-203. Residue 231 to 232 (TT) participates in substrate binding. Positions 269–290 (LHPRPLTSNFRPQQPLGGRRIS) are disordered.

This sequence belongs to the alpha-carbonic anhydrase family. Requires Zn(2+) as cofactor.

It is found in the secreted. The enzyme catalyses hydrogencarbonate + H(+) = CO2 + H2O. Its activity is regulated as follows. Repressed by coumarins. Reversible hydration of carbon dioxide. This is Carbonic anhydrase 15 (Ca15) from Mus musculus (Mouse).